A 33-amino-acid chain; its full sequence is Kunitz-type serine protease inhibitor hainantoxin F7-25.66 (33 aa).

One can recognise a BPTI/Kunitz inhibitor domain in the interval 4-33 (CRLPSDRGRCKASFERWYFNGRTCAKFIYG).

This sequence belongs to the venom Kunitz-type family. 02 (native) subfamily. Expressed by the venom gland.

It localises to the secreted. In terms of biological role, serine protease inhibitor that inhibits trypsin at a molar ratio of 1:1. This is Kunitz-type serine protease inhibitor hainantoxin F7-25.66 from Cyriopagopus hainanus (Chinese bird spider).